A 98-amino-acid chain; its full sequence is Beta-elicitin cinnamomin (98 aa).

Cystine bridges form between Cys3/Cys71, Cys27/Cys56, and Cys51/Cys95. A Beak-like motif 1 (ligand binding) motif is present at residues 33-42 (YSMLTATALP). The short motif at 72-83 (DLTVPTSGLVLD) is the Beak-like motif 2 (ligand binding) element.

This sequence belongs to the elicitin family.

The protein localises to the secreted. Induces local and distal defense responses (incompatible hypersensitive reaction) in plants from the solanaceae and cruciferae families. Elicits leaf necrosis and causes the accumulation of pathogenesis-related proteins. Might interact with the lipidic molecules of the plasma membrane. Elicitins are able to load, carry, and transfer sterols between membranes. The protein is Beta-elicitin cinnamomin of Phytophthora cinnamomi (Cinnamon fungus).